The sequence spans 205 residues: High frequency lysogenization protein HflD homolog (205 aa).

This sequence belongs to the HflD family.

The protein localises to the cytoplasm. It localises to the cell inner membrane. The polypeptide is High frequency lysogenization protein HflD homolog (Alkalilimnicola ehrlichii (strain ATCC BAA-1101 / DSM 17681 / MLHE-1)).